The sequence spans 353 residues: S-adenosylmethionine:tRNA ribosyltransferase-isomerase (353 aa).

Belongs to the QueA family. In terms of assembly, monomer.

Its subcellular location is the cytoplasm. It catalyses the reaction 7-aminomethyl-7-carbaguanosine(34) in tRNA + S-adenosyl-L-methionine = epoxyqueuosine(34) in tRNA + adenine + L-methionine + 2 H(+). It participates in tRNA modification; tRNA-queuosine biosynthesis. Functionally, transfers and isomerizes the ribose moiety from AdoMet to the 7-aminomethyl group of 7-deazaguanine (preQ1-tRNA) to give epoxyqueuosine (oQ-tRNA). This chain is S-adenosylmethionine:tRNA ribosyltransferase-isomerase, found in Rickettsia bellii (strain RML369-C).